An 83-amino-acid polypeptide reads, in one-letter code: Large ribosomal subunit protein bL31B (83 aa).

Belongs to the bacterial ribosomal protein bL31 family. Type B subfamily. Part of the 50S ribosomal subunit.

In terms of biological role, binds the 23S rRNA. This Hydrogenovibrio crunogenus (strain DSM 25203 / XCL-2) (Thiomicrospira crunogena) protein is Large ribosomal subunit protein bL31B.